Reading from the N-terminus, the 377-residue chain is O-phospho-L-seryl-tRNA:Cys-tRNA synthase (377 aa).

Residues 83-84, N188, and 211-213 contribute to the pyridoxal 5'-phosphate site; these read AR and SGH. K214 carries the N6-(pyridoxal phosphate)lysine modification.

It belongs to the SepCysS family. In terms of assembly, homodimer. Interacts with SepRS. It depends on pyridoxal 5'-phosphate as a cofactor.

It catalyses the reaction O-phospho-L-seryl-tRNA(Cys) + hydrogen sulfide + H(+) = L-cysteinyl-tRNA(Cys) + phosphate. Its function is as follows. Converts O-phospho-L-seryl-tRNA(Cys) (Sep-tRNA(Cys)) to L-cysteinyl-tRNA(Cys) (Cys-tRNA(Cys)). This is O-phospho-L-seryl-tRNA:Cys-tRNA synthase from Methanothermobacter thermautotrophicus (strain ATCC 29096 / DSM 1053 / JCM 10044 / NBRC 100330 / Delta H) (Methanobacterium thermoautotrophicum).